Reading from the N-terminus, the 233-residue chain is CDP-diacylglycerol--glycerol-3-phosphate 3-phosphatidyltransferase 2 (233 aa).

The segment at 1-23 (MGEEDTATVDQNSFGGGKDSLLR) is disordered. Helical transmembrane passes span 40–60 (VITLPTVLTLGRVAAVPILVA), 71–91 (TATTSIFIAAAITDWLDGYIA), 100–120 (FGAFLDPVADKLMVAATLILL), 125–145 (MVAVVLGPVPWLVTVPSIAII), and 201–221 (LPSGIGLLYVSAGLSIWSLVV).

It belongs to the CDP-alcohol phosphatidyltransferase class-I family. It depends on Mn(2+) as a cofactor.

The protein resides in the microsome membrane. Its subcellular location is the endoplasmic reticulum membrane. The catalysed reaction is a CDP-1,2-diacyl-sn-glycerol + sn-glycerol 3-phosphate = a 1,2-diacyl-sn-glycero-3-phospho-(1'-sn-glycero-3'-phosphate) + CMP + H(+). It functions in the pathway phospholipid metabolism; phosphatidylglycerol biosynthesis; phosphatidylglycerol from CDP-diacylglycerol: step 1/2. Catalyzes the committed step to the synthesis of the acidic phospholipids, including phosphatidylglycerol (PG). Together with PGPS1, required for the proper embryo development by providing PG accurate levels. In Arabidopsis thaliana (Mouse-ear cress), this protein is CDP-diacylglycerol--glycerol-3-phosphate 3-phosphatidyltransferase 2.